Here is a 256-residue protein sequence, read N- to C-terminus: Ribonuclease T2 (256 aa).

The N-terminal stretch at 1 to 24 (MRPAALRGALLGCLCLALLCLGGA) is a signal peptide. Cysteine 48 and cysteine 55 form a disulfide bridge. Histidine 65 is a catalytic residue. 3 cysteine pairs are disulfide-bonded: cysteine 75–cysteine 121, cysteine 184–cysteine 241, and cysteine 202–cysteine 213. Asparagine 76 and asparagine 106 each carry an N-linked (GlcNAc...) asparagine glycan. Catalysis depends on residues glutamate 114 and histidine 118. A glycan (N-linked (GlcNAc...) asparagine) is linked at asparagine 212.

Belongs to the RNase T2 family. As to expression, ubiquitous. Higher expression levels observed in the temporal lobe and fetal brain.

The protein localises to the secreted. It localises to the lysosome lumen. Its subcellular location is the endoplasmic reticulum lumen. The protein resides in the mitochondrion intermembrane space. The enzyme catalyses a ribonucleotidyl-ribonucleotide-RNA + H2O = a 3'-end 3'-phospho-ribonucleotide-RNA + a 5'-end dephospho-ribonucleoside-RNA + H(+). It catalyses the reaction an adenylyl-uridine-RNA = a 3'-end 2',3'-cyclophospho-AMP-RNA + a 5'-end dephospho-uridine-RNA. It carries out the reaction a guanylyl-uridine-RNA = a 3'-end 2',3'-cyclophospho-GMP-RNA + a 5'-end dephospho-uridine-RNA. Its activity is regulated as follows. Inhibited by Zn(2+) and Cu(2+). Functionally, ribonuclease that plays an essential role in innate immune response by recognizing and degrading RNAs from microbial pathogens that are subsequently sensed by TLR8. Cleaves preferentially single-stranded RNA molecules between purine and uridine residues, which critically contributes to the supply of catabolic uridine and the generation of purine-2',3'-cyclophosphate-terminated oligoribonucleotides. In turn, RNase T2 degradation products promote the RNA-dependent activation of TLR8. In plasmacytoid dendritic cells, it cooperates with PLD3 or PLD4 5'-&gt;3' exonucleases to process RNA fragments and release 2',3'-cyclic guanosine monophosphate (2',3'-cGMP), a potent stimulatory ligand for TLR7. Also plays a key role in degradation of mitochondrial RNA and processing of non-coding RNA imported from the cytosol into mitochondria. Participates as well in degradation of mitochondrion-associated cytosolic rRNAs. This Homo sapiens (Human) protein is Ribonuclease T2 (RNASET2).